Reading from the N-terminus, the 213-residue chain is MDPSWATQESEAVAEKVLRYRRDASGWKKCREGNGVSISWRPSEEFPGNLYRGEGILCGTPEEVWDCIKPVASGLREKWDDNVSSFEIVQSITDMLCVSRTSTPSAAMKLISPRDFVDLVLVKKYEDGTISSNATHVEHPLCPPKPGFVRGFNHPCGCFCEPLPGDPNKTNLVTFFQTDLSGYLPQSVVDSFFPRSMAEFYPNLQKAVRKFHH.

Residues 1–213 (MDPSWATQES…LQKAVRKFHH (213 aa)) enclose the START domain.

Expressed in most tissues, with highest levels in liver and in kidney.

Its function is as follows. May be involved in the intracellular transport of sterols or other lipids. May bind cholesterol or other sterols. The chain is StAR-related lipid transfer protein 5 (Stard5) from Mus musculus (Mouse).